Reading from the N-terminus, the 566-residue chain is MKRNISMSLQRLLIILMMISFLFTSLLVPSVSATNLNTISTCLINYKVSNFSVYPTRNHAGNRYYNLLDFSIQNLRFAASSKPKPTVIIVPESKEQLVSSVLCCRQGSYEIRVRCGGHSYEGTSYVSFDGSPFVVIDLMKLDDVSVDLDSETAWVQGGATLGQTYYAISRASDVHGFSAGSCPTVGVGGHISGGGFGFLSRKYGLAADNVVDALLVDAEGRLLDRKAMGEEVFWAIRGGGGGIWGIIYAWKIRLLKVPKTVTSFIVPRPGSKRYVSQLVHKWQLVAPKLDDDFYLSISMSSASKGNIPIEINAQFSGFYLGTKTEAISILNEAFPELGVVESDCKEMSWIESTLFFSELDNVANTSDVSRLKERYFENKSYFKAKSDHVKTPISVGGIMTALDVLEKEPNGHVIFDPYGAAMQRISEEAIAFPHRKGNLFRIQYLVVWKEKDNNNIAKSNGYIEWIREFYNTMAPHVSSSPRAAYVNYMDLDLGVMDDYLMLNTSITASADHAVERARVWGEKYFLNNYDRLVKAKTKIDPLNVFRHQQGIPPMFASMPEHTYSSK.

The signal sequence occupies residues 1 to 33; sequence MKRNISMSLQRLLIILMMISFLFTSLLVPSVSA. Cysteines 42 and 103 form a disulfide. Asparagine 50 carries an N-linked (GlcNAc...) asparagine glycan. Residues 81 to 257 enclose the FAD-binding PCMH-type domain; sequence SKPKPTVIIV…YAWKIRLLKV (177 aa). Histidine 118 is subject to Pros-8alpha-FAD histidine. N-linked (GlcNAc...) asparagine glycosylation is found at asparagine 364, asparagine 378, and asparagine 503.

It belongs to the oxygen-dependent FAD-linked oxidoreductase family. Requires FAD as cofactor.

Its subcellular location is the vacuole. Its pathway is alkaloid biosynthesis; nicotine biosynthesis. Involved in the biosynthesis of pyridine alkaloid natural products, leading mainly to the production of anabasine, anatabine, nicotine and nornicotine, effective deterrents against herbivores with antiparasitic and pesticide properties (neurotoxins); nornicotine serves as the precursor in the synthesis of the carcinogen compound N'-nitrosonornicotine (NNN). Catalyzes a late oxidation step subsequent to the pyridine ring condensation reaction in the biosynthesis of alkaloids. In Nicotiana tabacum (Common tobacco), this protein is Berberine bridge enzyme-like D-2.